We begin with the raw amino-acid sequence, 776 residues long: Homoaconitase, mitochondrial (776 aa).

A mitochondrion-targeting transit peptide spans 1 to 38 (MQSRLVSQSGLGRRWAVLRCALSKTYQRRTLTSTRRQF). Residues cysteine 394, cysteine 463, and cysteine 466 each coordinate [4Fe-4S] cluster.

It belongs to the aconitase/IPM isomerase family. It depends on [4Fe-4S] cluster as a cofactor.

Its subcellular location is the mitochondrion. The catalysed reaction is (2R,3S)-homoisocitrate = cis-homoaconitate + H2O. It participates in amino-acid biosynthesis; L-lysine biosynthesis via AAA pathway; L-alpha-aminoadipate from 2-oxoglutarate: step 3/5. Catalyzes the reversible hydration of cis-homoaconitate to (2R,3S)-homoisocitrate, a step in the alpha-aminoadipate pathway for lysine biosynthesis. The sequence is that of Homoaconitase, mitochondrial (lys4) from Emericella nidulans (strain FGSC A4 / ATCC 38163 / CBS 112.46 / NRRL 194 / M139) (Aspergillus nidulans).